We begin with the raw amino-acid sequence, 546 residues long: Chaperonin GroEL (546 aa).

ATP-binding positions include 29-32 (TLGP), K50, 86-90 (DGTTT), G414, and D494. Residues 525–546 (KKESAAPAMPGHDGMGGMGGMM) are disordered. The segment covering 537–546 (DGMGGMGGMM) has biased composition (gly residues).

The protein belongs to the chaperonin (HSP60) family. In terms of assembly, forms a cylinder of 14 subunits composed of two heptameric rings stacked back-to-back. Interacts with the co-chaperonin GroES.

Its subcellular location is the cytoplasm. It carries out the reaction ATP + H2O + a folded polypeptide = ADP + phosphate + an unfolded polypeptide.. Functionally, together with its co-chaperonin GroES, plays an essential role in assisting protein folding. The GroEL-GroES system forms a nano-cage that allows encapsulation of the non-native substrate proteins and provides a physical environment optimized to promote and accelerate protein folding. This is Chaperonin GroEL from Bdellovibrio bacteriovorus (strain ATCC 15356 / DSM 50701 / NCIMB 9529 / HD100).